Here is a 293-residue protein sequence, read N- to C-terminus: Triacylglycerol lipase (293 aa).

In terms of domain architecture, AB hydrolase-1 spans 10-206 (PILLVHGLFG…YYSWSGIIKG (197 aa)). Leu-17 lines the substrate pocket. The active-site Nucleophile is the Ser-83. Gln-84 is a binding site for substrate. Asp-217 contacts Ca(2+). Catalysis depends on charge relay system residues Asp-238 and His-260. Residues Asp-262, His-266, and Arg-269 each coordinate Ca(2+).

The protein belongs to the AB hydrolase superfamily. Pseudomonas lipase family. The cofactor is Ca(2+).

It localises to the secreted. The enzyme catalyses a triacylglycerol + H2O = a diacylglycerol + a fatty acid + H(+). In terms of biological role, catalyzes the hydrolysis of triacylglycerols, with the highest activity with tributyrin (C4), lower activity with tricaprylin (C8), and much lower activity with triacetin (C2), trilaurin (C12) and triolein (C18). This Pseudomonas fragi protein is Triacylglycerol lipase (lips).